The chain runs to 301 residues: GTPase IMAP family member 3 (301 aa).

The Cytoplasmic portion of the chain corresponds to 1–279 (METLQNVVTG…GKKLEVLHSD (279 aa)). An AIG1-type G domain is found at 20 to 223 (SRPLRILLVG…HSNDLFLHAE (204 aa)). GTP is bound by residues 29–37 (GKSGCGKSA), S50, 147–149 (RKE), and N184. The interval 263-301 (VLKVLPIGKKLEVLHSDFCWYLVLAILIFFVFFFLLFYV) is required for targeting to the endoplasmic reticulum. Residues 280–300 (FCWYLVLAILIFFVFFFLLFY) traverse the membrane as a helical; Anchor for type IV membrane protein segment. Position 301 (V301) is a topological domain, lumenal.

The protein belongs to the TRAFAC class TrmE-Era-EngA-EngB-Septin-like GTPase superfamily. AIG1/Toc34/Toc159-like paraseptin GTPase family. IAN subfamily. As to quaternary structure, interacts with BAD, BAK1, BAX, BCL2, BCL2L1/Bcl-xL and BCL2L11/BimEL. The interaction with BAX is increased, when cells initiate apoptosis upon IL2 withdrawal. Expressed in thymus (in thymocytes), spleen (in splenocytes), lymph node and, at lower levels, in lung. Highly expressed in T lymphocytes.

Its subcellular location is the endoplasmic reticulum membrane. Its function is as follows. During thymocyte development, may support the positive selection of CD4 and CD8 T cells. May play a role in mitochondrial DNA segregation in hematopoietic tissues. Binds GTP. This is GTPase IMAP family member 3 (Gimap3) from Mus musculus (Mouse).